Reading from the N-terminus, the 380-residue chain is Aprataxin (380 aa).

In terms of domain architecture, FHA-like spans 36 to 85 (PVIIGRTPELGITDKLCSRSQLELTSNCYKRYVLVKRLGANTSQINGIDI). Positions 176–207 (VYAFDSPSPMSSRCEKKAESNKRAPTHKHWSQ) are disordered. Residues 188–197 (RCEKKAESNK) are compositionally biased toward basic and acidic residues. The HIT domain occupies 206 to 312 (SQGLKASMED…ISQDFQSSSF (107 aa)). 2 interaction with DNA substrate regions span residues 231–235 (DKYPK) and 294–295 (SM). The Histidine triad motif motif lies at 297-301 (QMHMH). Catalysis depends on His-299, which acts as the Tele-AMP-histidine intermediate. The C2H2-type; atypical zinc-finger motif lies at 356–378 (LKCHRCKKPQKNIPTLKKHIDSC).

Its subcellular location is the nucleus. It is found in the nucleoplasm. The protein localises to the nucleolus. The catalysed reaction is a 5'-end adenosine-5'-diphospho-5'-2'-deoxyribonucleoside-DNA + H2O = a 5'-end 5'-phospho-2'-deoxyribonucleoside-DNA + AMP + 2 H(+). It catalyses the reaction a 5'-end adenosine-5'-diphospho-5'-ribonucleoside-2'-deoxyribonucleotide-DNA + H2O = a 5'-end 5'-phospho-ribonucleoside-2'-deoxyribonucleotide-DNA + AMP + 2 H(+). It carries out the reaction a 3'-end 2'-deoxyribonucleotide-3'-diphospho-5'-guanosine-DNA + H2O = a 3'-end 2'-deoxyribonucleotide 3'-phosphate-DNA + GMP + 2 H(+). DNA-binding protein involved in single-strand DNA break repair, double-strand DNA break repair and base excision repair. Resolves abortive DNA ligation intermediates formed either at base excision sites, or when DNA ligases attempt to repair non-ligatable breaks induced by reactive oxygen species. Catalyzes the release of adenylate groups covalently linked to 5'-phosphate termini, resulting in the production of 5'-phosphate termini that can be efficiently rejoined. Also able to hydrolyze adenosine 5'-monophosphoramidate (AMP-NH(2)) and diadenosine tetraphosphate (AppppA), but with lower catalytic activity. Likewise, catalyzes the release of 3'-linked guanosine (DNAppG) and inosine (DNAppI) from DNA, but has higher specific activity with 5'-linked adenosine (AppDNA). This chain is Aprataxin (APTX), found in Ciona intestinalis (Transparent sea squirt).